The primary structure comprises 357 residues: Acyl-coenzyme A diphosphatase NUDT19 (357 aa).

One can recognise a Nudix hydrolase domain in the interval alanine 10–glutamate 242. Residues proline 72 to aspartate 93 are disordered. Residues proline 78–proline 87 are compositionally biased toward pro residues. Residues alanine 97–glycine 118 carry the Nudix box motif. Residues glutamate 112 and glutamate 116 each coordinate Mg(2+). N6-succinyllysine is present on lysine 300. A Microbody targeting signal motif is present at residues alanine 355–leucine 357.

It belongs to the Nudix hydrolase family. As to quaternary structure, monomer. The cofactor is Mg(2+). Mn(2+) serves as cofactor. As to expression, highly expressed in the kidneys, with lower levels in skeletal muscle and brain (at protein level).

It localises to the peroxisome. It carries out the reaction an acyl-CoA + H2O = an acyl-4'-phosphopantetheine + adenosine 3',5'-bisphosphate + 2 H(+). The enzyme catalyses CoA + H2O = (R)-4'-phosphopantetheine + adenosine 3',5'-bisphosphate + 2 H(+). It catalyses the reaction hexanoyl-CoA + H2O = hexanoyl-4'-phosphopantetheine + adenosine 3',5'-bisphosphate + 2 H(+). The catalysed reaction is octanoyl-CoA + H2O = S-octanoyl-4'-phosphopantetheine + adenosine 3',5'-bisphosphate + 2 H(+). It carries out the reaction butanoyl-CoA + H2O = S-butanoyl-4'-phosphopantetheine + adenosine 3',5'-bisphosphate + 2 H(+). The enzyme catalyses propanoyl-CoA + H2O = propanoyl-4'-phosphopantetheine + adenosine 3',5'-bisphosphate + 2 H(+). It catalyses the reaction malonyl-CoA + H2O = malonyl-4'-phosphopantetheine + adenosine 3',5'-bisphosphate + 2 H(+). The catalysed reaction is succinyl-CoA + H2O = succinyl-4'-phosphopantetheine + adenosine 3',5'-bisphosphate + 2 H(+). It carries out the reaction choloyl-CoA + H2O = S-choloyl-4'-phosphopantetheine + adenosine 3',5'-bisphosphate + 2 H(+). The enzyme catalyses 4,8-dimethylnonanoyl-CoA + H2O = S-(4,8-dimethylnonanoyl)-4'-phosphopantetheine + adenosine 3',5'-bisphosphate + 2 H(+). It catalyses the reaction (9Z,12Z,15Z)-octadecatrienoyl-CoA + H2O = S-(9Z,12Z,15Z-octadecatrienoyl)-4'-phosphopantetheine + adenosine 3',5'-bisphosphate + 2 H(+). The catalysed reaction is (9Z,12Z)-octadecadienoyl-CoA + H2O = S-(9Z,12Z-octadecadienoyl)-4'-phosphopantetheine + adenosine 3',5'-bisphosphate + 2 H(+). It carries out the reaction (9Z)-hexadecenoyl-CoA + H2O = S-(9Z-hexadecenoyl)-4'-phosphopantetheine + adenosine 3',5'-bisphosphate + 2 H(+). The enzyme catalyses (9Z)-tetradecenoyl-CoA + H2O = S-(9Z-tetradecenoyl)-4'-phosphopantetheine + adenosine 3',5'-bisphosphate + 2 H(+). It catalyses the reaction (6Z)-octenoyl-CoA + H2O = S-(6Z-octenoyl)-4'-phosphopantetheine + adenosine 3',5'-bisphosphate + 2 H(+). The catalysed reaction is hexadecanoyl-CoA + H2O = S-hexadecanoyl-4'-phosphopantetheine + adenosine 3',5'-bisphosphate + 2 H(+). It carries out the reaction tetradecanoyl-CoA + H2O = tetradecanoyl-4'-phosphopantetheine + adenosine 3',5'-bisphosphate + 2 H(+). The enzyme catalyses dodecanoyl-CoA + H2O = S-dodecanoyl-4'-phosphopantetheine + adenosine 3',5'-bisphosphate + 2 H(+). It catalyses the reaction a 5'-end CoA-ribonucleoside in mRNA + H2O = a 5'-end phospho-adenosine-phospho-ribonucleoside in mRNA + (R)-4'-phosphopantetheine + 2 H(+). With respect to regulation, inhibited by chenodeoxycholic acid (CDCA) and its conjugated derivatives, taurochenodeoxycholic acid and glycochenodeoxycholic acid. Inhibited by fluoride. Functionally, fatty acyl-coenzyme A (CoA) diphosphatase that hydrolyzes fatty acyl-CoA to yield acyl-4'-phosphopantetheine and adenosine 3',5'-bisphosphate. Mediates the hydrolysis of a wide range of CoA esters, including choloyl-CoA and branched-chain fatty-acyl-CoA esters and at low substrate concentrations medium and long-chain fatty-acyl-CoA esters are the primary substrates. Highest activity seen with medium-chain acyl-CoA esters and higher rates of activity seen with the unsaturated acyl-CoA esters compared with the saturated esters. Exhibits decapping activity towards dpCoA-capped RNAs in vitro. The sequence is that of Acyl-coenzyme A diphosphatase NUDT19 (Nudt19) from Mus musculus (Mouse).